The primary structure comprises 486 residues: Regulatory protein ViaA (486 aa).

It belongs to the ViaA family. Homodimer. Interacts with RavA.

Its subcellular location is the cytoplasm. Component of the RavA-ViaA chaperone complex, which may act on the membrane to optimize the function of some of the respiratory chains. ViaA stimulates the ATPase activity of RavA. This is Regulatory protein ViaA from Erwinia tasmaniensis (strain DSM 17950 / CFBP 7177 / CIP 109463 / NCPPB 4357 / Et1/99).